Here is a 146-residue protein sequence, read N- to C-terminus: Anti-sigma F factor (146 aa).

Belongs to the anti-sigma-factor family.

It carries out the reaction L-seryl-[protein] + ATP = O-phospho-L-seryl-[protein] + ADP + H(+). The enzyme catalyses L-threonyl-[protein] + ATP = O-phospho-L-threonyl-[protein] + ADP + H(+). In terms of biological role, binds to sigma F and blocks its ability to form an RNA polymerase holoenzyme (E-sigma F). Phosphorylates SpoIIAA on a serine residue. This phosphorylation may enable SpoIIAA to act as an anti-anti-sigma factor that counteracts SpoIIAB and thus releases sigma F from inhibition. The polypeptide is Anti-sigma F factor (Bacillus licheniformis (strain ATCC 14580 / DSM 13 / JCM 2505 / CCUG 7422 / NBRC 12200 / NCIMB 9375 / NCTC 10341 / NRRL NRS-1264 / Gibson 46)).